The following is a 104-amino-acid chain: MTAPTKMTFFSRFEADILAGKKTITIRDESEKDYQPGTTVEVSTLEEGRVFCQLKILSVEPIAFSALNEFHAEQENMTLETLKEVIQEIYPGIEQLYVIQYQRV.

The 87-residue stretch at 7–93 folds into the ASCH domain; it reads MTFFSRFEAD…EVIQEIYPGI (87 aa). Lys22 (proton acceptor) is an active-site residue. The Nucleophile role is filled by Thr25. Glu75 serves as the catalytic Proton donor.

The protein belongs to the N(4)-acetylcytidine amidohydrolase family.

The enzyme catalyses N(4)-acetylcytidine + H2O = cytidine + acetate + H(+). The catalysed reaction is N(4)-acetyl-2'-deoxycytidine + H2O = 2'-deoxycytidine + acetate + H(+). It catalyses the reaction N(4)-acetylcytosine + H2O = cytosine + acetate + H(+). Its function is as follows. Catalyzes the hydrolysis of N(4)-acetylcytidine (ac4C). In Vibrio vulnificus (strain CMCP6), this protein is N(4)-acetylcytidine amidohydrolase.